The sequence spans 850 residues: Bifunctional levopimaradiene synthase, chloroplastic (850 aa).

A chloroplast-targeting transit peptide spans 1–52; sequence MALPSSSLSSQIHTGATTQCIPHFHGSLNAGTSAGKRRSLYLRWGKGPSKIV. Residue lysine 250 coordinates substrate. Residues aspartate 383 and aspartate 385 each contribute to the Mg(2+) site. The DXDD motif motif lies at 383–386; that stretch reads DIDD. Lysine 470 is a binding site for substrate. The Mg(2+) site is built by aspartate 602, aspartate 606, asparagine 746, threonine 750, and glutamate 754. The DDXXD motif motif lies at 602–606; that stretch reads DDLYD.

This sequence belongs to the terpene synthase family. Tpsd subfamily. It depends on Mg(2+) as a cofactor.

It localises to the plastid. Its subcellular location is the chloroplast. The enzyme catalyses (2E,6E,10E)-geranylgeranyl diphosphate = (+)-copalyl diphosphate. The catalysed reaction is (+)-copalyl diphosphate = abieta-7,13-diene + diphosphate. It carries out the reaction (+)-copalyl diphosphate = abieta-8(14),12-diene + diphosphate. It catalyses the reaction (+)-copalyl diphosphate = neoabietadiene + diphosphate. It participates in terpene metabolism; oleoresin biosynthesis. Its function is as follows. Involved in defensive oleoresin formation in conifers in response to insect attack or other injury. Involved in diterpene (C20) olefins biosynthesis. Bifunctional enzyme that catalyzes two sequential cyclizations of geranylgeranyl diphosphate (GGPP) to levopimaradiene. Levopimaradiene is the major products of the enzyme with abietadiene and neoabietadiene. No activity with farnesyl diphosphate (FPP) as substrate. This Pinus contorta (Shore pine) protein is Bifunctional levopimaradiene synthase, chloroplastic.